The chain runs to 210 residues: Protein-L-isoaspartate O-methyltransferase (210 aa).

Ser54 is an active-site residue.

The protein belongs to the methyltransferase superfamily. L-isoaspartyl/D-aspartyl protein methyltransferase family.

It is found in the cytoplasm. It carries out the reaction [protein]-L-isoaspartate + S-adenosyl-L-methionine = [protein]-L-isoaspartate alpha-methyl ester + S-adenosyl-L-homocysteine. In terms of biological role, catalyzes the methyl esterification of L-isoaspartyl residues in peptides and proteins that result from spontaneous decomposition of normal L-aspartyl and L-asparaginyl residues. It plays a role in the repair and/or degradation of damaged proteins. In Methanothrix thermoacetophila (strain DSM 6194 / JCM 14653 / NBRC 101360 / PT) (Methanosaeta thermophila), this protein is Protein-L-isoaspartate O-methyltransferase.